Reading from the N-terminus, the 453-residue chain is tRNA modification GTPase MnmE (453 aa).

Positions 22, 79, and 119 each coordinate (6S)-5-formyl-5,6,7,8-tetrahydrofolate. The region spanning 215 to 376 (GMKVVIAGRP…LKQHLKSLMG (162 aa)) is the TrmE-type G domain. Asparagine 225 contributes to the K(+) binding site. GTP-binding positions include 225 to 230 (NAGKSS), 244 to 250 (TEIAGTT), 269 to 272 (DTAG), and 334 to 337 (NKAD). Serine 229 contacts Mg(2+). Positions 244, 246, and 249 each coordinate K(+). Residue threonine 250 coordinates Mg(2+). Residue lysine 453 coordinates (6S)-5-formyl-5,6,7,8-tetrahydrofolate.

Belongs to the TRAFAC class TrmE-Era-EngA-EngB-Septin-like GTPase superfamily. TrmE GTPase family. As to quaternary structure, homodimer. Heterotetramer of two MnmE and two MnmG subunits. It depends on K(+) as a cofactor.

The protein resides in the cytoplasm. In terms of biological role, exhibits a very high intrinsic GTPase hydrolysis rate. Involved in the addition of a carboxymethylaminomethyl (cmnm) group at the wobble position (U34) of certain tRNAs, forming tRNA-cmnm(5)s(2)U34. The sequence is that of tRNA modification GTPase MnmE from Shewanella sp. (strain MR-7).